The chain runs to 59 residues: Single-pass membrane and coiled-coil domain-containing protein 4 (59 aa).

The segment at 1-27 (MRQLKGKPKKETSRDKKERKQAMQEAR) is disordered. Basic and acidic residues predominate over residues 9–27 (KKETSRDKKERKQAMQEAR). Positions 9–31 (KKETSRDKKERKQAMQEARRQIT) form a coiled coil. The chain crosses the membrane as a helical span at residues 32–52 (TVVLPTLAVVVLLIVVFVYVA).

The protein belongs to the SMCO4 family.

The protein localises to the membrane. In Bos taurus (Bovine), this protein is Single-pass membrane and coiled-coil domain-containing protein 4 (SMCO4).